The sequence spans 105 residues: Replication initiation control protein YabA (105 aa).

4 residues coordinate Zn(2+): H79, C81, C95, and C98.

Belongs to the YabA family. In terms of assembly, homotetramer. Interacts with both DnaA and DnaN, acting as a bridge between these two proteins. The cofactor is Zn(2+).

The protein resides in the cytoplasm. It localises to the nucleoid. In terms of biological role, involved in control of chromosome replication initiation. Inhibits the cooperative binding of DnaA to the oriC region, thus negatively regulating initiation of chromosome replication. Inhibits the ability of DnaA-ATP to form a helix on DNA; does not disassemble preformed DnaA-DNA helices. Decreases the residence time of DnaA on the chromosome at its binding sites (oriC, replication forks and promoter-binding sites). Tethers DnaA to the replication machinery via the DNA polymerase beta sliding clamp subunit (dnaN). Associates with oriC and other DnaA targets on the chromosome in a DnaA-dependent manner. In Streptococcus pneumoniae serotype 2 (strain D39 / NCTC 7466), this protein is Replication initiation control protein YabA.